We begin with the raw amino-acid sequence, 124 residues long: uncharacterized protein (124 aa).

Its subcellular location is the plastid. It is found in the chloroplast. This is an uncharacterized protein from Chlamydomonas reinhardtii (Chlamydomonas smithii).